We begin with the raw amino-acid sequence, 420 residues long: UDP-N-acetylglucosamine 1-carboxyvinyltransferase (420 aa).

A phosphoenolpyruvate-binding site is contributed by 22-23 (KN). Residue Arg-93 participates in UDP-N-acetyl-alpha-D-glucosamine binding. The Proton donor role is filled by Cys-117. The residue at position 117 (Cys-117) is a 2-(S-cysteinyl)pyruvic acid O-phosphothioketal. UDP-N-acetyl-alpha-D-glucosamine is bound by residues Asp-307 and Ile-329.

Belongs to the EPSP synthase family. MurA subfamily.

The protein resides in the cytoplasm. It carries out the reaction phosphoenolpyruvate + UDP-N-acetyl-alpha-D-glucosamine = UDP-N-acetyl-3-O-(1-carboxyvinyl)-alpha-D-glucosamine + phosphate. It functions in the pathway cell wall biogenesis; peptidoglycan biosynthesis. Cell wall formation. Adds enolpyruvyl to UDP-N-acetylglucosamine. This Shewanella pealeana (strain ATCC 700345 / ANG-SQ1) protein is UDP-N-acetylglucosamine 1-carboxyvinyltransferase.